A 185-amino-acid polypeptide reads, in one-letter code: ATP-dependent protease subunit HslV (185 aa).

Thr14 is an active-site residue. The Na(+) site is built by Ala168, Cys171, and Thr174.

The protein belongs to the peptidase T1B family. HslV subfamily. As to quaternary structure, a double ring-shaped homohexamer of HslV is capped on each side by a ring-shaped HslU homohexamer. The assembly of the HslU/HslV complex is dependent on binding of ATP.

It localises to the cytoplasm. It carries out the reaction ATP-dependent cleavage of peptide bonds with broad specificity.. Allosterically activated by HslU binding. Its function is as follows. Protease subunit of a proteasome-like degradation complex believed to be a general protein degrading machinery. In Hyphomonas neptunium (strain ATCC 15444), this protein is ATP-dependent protease subunit HslV.